The primary structure comprises 457 residues: Chromosomal replication initiator protein DnaA (457 aa).

The domain I, interacts with DnaA modulators stretch occupies residues 1–75 (MDAQLNNLWE…ALKIVTSRKF (75 aa)). The segment at 75–118 (FKIEFYLESDLEEEKENEEKQKEEKKENTNDVDGSIVVSDEMSA) is domain II. A domain III, AAA+ region region spans residues 119–335 (TLNPKYTFQS…GALIRIIAYS (217 aa)). 4 residues coordinate ATP: Gly163, Gly165, Lys166, and Thr167. A domain IV, binds dsDNA region spans residues 336–457 (SLTNRDVSVD…NDITKKLTQK (122 aa)).

The protein belongs to the DnaA family. In terms of assembly, oligomerizes as a right-handed, spiral filament on DNA at oriC.

It localises to the cytoplasm. Its function is as follows. Plays an essential role in the initiation and regulation of chromosomal replication. ATP-DnaA binds to the origin of replication (oriC) to initiate formation of the DNA replication initiation complex once per cell cycle. Binds the DnaA box (a 9 base pair repeat at the origin) and separates the double-stranded (ds)DNA. Forms a right-handed helical filament on oriC DNA; dsDNA binds to the exterior of the filament while single-stranded (ss)DNA is stabiized in the filament's interior. The ATP-DnaA-oriC complex binds and stabilizes one strand of the AT-rich DNA unwinding element (DUE), permitting loading of DNA polymerase. After initiation quickly degrades to an ADP-DnaA complex that is not apt for DNA replication. Binds acidic phospholipids. The chain is Chromosomal replication initiator protein DnaA from Clostridium perfringens (strain ATCC 13124 / DSM 756 / JCM 1290 / NCIMB 6125 / NCTC 8237 / Type A).